The following is a 702-amino-acid chain: Ribosomal RNA large subunit methyltransferase K/L (702 aa).

The THUMP domain occupies 43–154; that stretch reads LIYQSLMWSR…KETASIALDL (112 aa).

This sequence belongs to the methyltransferase superfamily. RlmKL family.

It is found in the cytoplasm. The enzyme catalyses guanosine(2445) in 23S rRNA + S-adenosyl-L-methionine = N(2)-methylguanosine(2445) in 23S rRNA + S-adenosyl-L-homocysteine + H(+). The catalysed reaction is guanosine(2069) in 23S rRNA + S-adenosyl-L-methionine = N(2)-methylguanosine(2069) in 23S rRNA + S-adenosyl-L-homocysteine + H(+). Functionally, specifically methylates the guanine in position 2445 (m2G2445) and the guanine in position 2069 (m7G2069) of 23S rRNA. This is Ribosomal RNA large subunit methyltransferase K/L from Salmonella gallinarum (strain 287/91 / NCTC 13346).